Here is a 377-residue protein sequence, read N- to C-terminus: 3-dehydroquinate synthase (377 aa).

NAD(+) is bound by residues 115–119 (GVIGD), 139–140 (TS), Lys152, and Lys162. Residues Glu195, His257, and His276 each contribute to the Zn(2+) site.

It belongs to the sugar phosphate cyclases superfamily. Dehydroquinate synthase family. The cofactor is Co(2+). It depends on Zn(2+) as a cofactor. Requires NAD(+) as cofactor.

Its subcellular location is the cytoplasm. It catalyses the reaction 7-phospho-2-dehydro-3-deoxy-D-arabino-heptonate = 3-dehydroquinate + phosphate. It functions in the pathway metabolic intermediate biosynthesis; chorismate biosynthesis; chorismate from D-erythrose 4-phosphate and phosphoenolpyruvate: step 2/7. In terms of biological role, catalyzes the conversion of 3-deoxy-D-arabino-heptulosonate 7-phosphate (DAHP) to dehydroquinate (DHQ). This chain is 3-dehydroquinate synthase, found in Rhizobium etli (strain ATCC 51251 / DSM 11541 / JCM 21823 / NBRC 15573 / CFN 42).